The sequence spans 492 residues: MGTEAEQPSPPAQQQDQENPPLCKAQNPKPARLYRFVLIFVAGSLAAWTFHALSSTNLVWKLRQLHHLPTAHYLQTRDEFALYSVEELNAFKEFYDKSVSDSVGASYTEAEQTNIKEALGALRMAQDLYLAGKDDKAARLFEHALALAPRHPEVLLRYGEFLEHNQRNIVLADQYYFQALTISPSNSEALANRQRTADVVQSLDERRLESLDSKRDALSAIHESNGALRRAKKEAYFQHIYHSVGIEGNTMTLAQTRSILETRMAVDGKSIDEHNEILGMDLAMKYINASLVQKIDITIKDILELHRRVLGHVDPIEGGEFRRNQVYVGGHIPPGPGDLALLMQRFERWLNSEHSSTLHPVNYAALAHYKLVHIHPFVDGNGRTSRLLMNTLLMRAGYPPVIIPKQQRSKYYHFLKLANEGDIRPFVRFIADCTEKTLDLYLWATSDLPQQIPMLIQTESEAGERLAQMQSPNVAQRSSILEFYESGSGDLP.

Positions 1–18 are enriched in low complexity; the sequence is MGTEAEQPSPPAQQQDQE. The segment at 1 to 26 is disordered; the sequence is MGTEAEQPSPPAQQQDQENPPLCKAQ. Residues 33 to 55 form a helical membrane-spanning segment; it reads LYRFVLIFVAGSLAAWTFHALSS. 2 TPR repeats span residues 118-151 and 152-186; these read ALGALRMAQDLYLAGKDDKAARLFEHALALAPRH and PEVLLRYGEFLEHNQRNIVLADQYYFQALTISPSN. An Inhibitory (S/T)XXXE(G/N) motif motif is present at residues 243 to 248; it reads SVGIEG. ATP contacts are provided by residues glutamate 247 and 328–331; that span reads VGGH. A Fido domain is found at 297–432; it reads ITIKDILELH…IRPFVRFIAD (136 aa). Histidine 375 is a catalytic residue. ATP is bound by residues 379–386, 411–412, and asparagine 419; these read DGNGRTSR and YY.

Belongs to the fic family. As to quaternary structure, homodimer; homodimerization may regulate adenylyltransferase and phosphodiesterase activities.

It is found in the membrane. The catalysed reaction is L-tyrosyl-[protein] + ATP = O-(5'-adenylyl)-L-tyrosyl-[protein] + diphosphate. The enzyme catalyses L-threonyl-[protein] + ATP = 3-O-(5'-adenylyl)-L-threonyl-[protein] + diphosphate. It carries out the reaction 3-O-(5'-adenylyl)-L-threonyl-[protein] + H2O = L-threonyl-[protein] + AMP + H(+). Its activity is regulated as follows. The side chain of Glu-247 determines which of the two opposing activities (AMPylase or de-AMPylase) will take place. In response to endoplasmic reticulum stress, mediates de-AMPylase activity. Adenylyltransferase activity is inhibited by the inhibitory helix present at the N-terminus: Glu-247 binds ATP and competes with ATP-binding at Arg-386, thereby preventing adenylyltransferase activity. In unstressed cells, disengagement of Glu-247 promotes adenylyltransferase activity. Activation dissociates ATP-binding from Glu-247, allowing ordered binding of the entire ATP moiety with the alpha-phosphate in an orientation that is productive for accepting an incoming target hydroxyl side chain. In terms of biological role, protein that can both mediate the addition of adenosine 5'-monophosphate (AMP) to specific residues of target proteins (AMPylation), and the removal of the same modification from target proteins (de-AMPylation), depending on the context. The side chain of Glu-247 determines which of the two opposing activities (AMPylase or de-AMPylase) will take place. Acts as a key regulator of the unfolded protein response (UPR) by mediating AMPylation or de-AMPylation of Hsc70-3/BiP. In unstressed cells, acts as an adenylyltransferase by mediating AMPylation of Hsc70-3/BiP at 'Thr-518', thereby inactivating it. In response to endoplasmic reticulum stress, acts as a phosphodiesterase by mediating removal of ATP (de-AMPylation) from Hsc70-3/BiP at 'Thr-518', leading to restore HSPA5/BiP activity. The sequence is that of Protein adenylyltransferase Fic from Drosophila melanogaster (Fruit fly).